Here is a 118-residue protein sequence, read N- to C-terminus: Ribonuclease P protein component (118 aa).

Belongs to the RnpA family. As to quaternary structure, consists of a catalytic RNA component (M1 or rnpB) and a protein subunit.

The enzyme catalyses Endonucleolytic cleavage of RNA, removing 5'-extranucleotides from tRNA precursor.. RNaseP catalyzes the removal of the 5'-leader sequence from pre-tRNA to produce the mature 5'-terminus. It can also cleave other RNA substrates such as 4.5S RNA. The protein component plays an auxiliary but essential role in vivo by binding to the 5'-leader sequence and broadening the substrate specificity of the ribozyme. The chain is Ribonuclease P protein component from Vibrio parahaemolyticus serotype O3:K6 (strain RIMD 2210633).